The primary structure comprises 296 residues: Ribosomal RNA small subunit methyltransferase A (296 aa).

Residues 1 to 11 (MERSHVGRDCG) are compositionally biased toward basic and acidic residues. The disordered stretch occupies residues 1–24 (MERSHVGRDCGSRSSPRAFSVPTS). Over residues 12–24 (SRSSPRAFSVPTS) the composition is skewed to polar residues. Asparagine 43, leucine 45, glycine 70, glutamate 91, aspartate 113, and asparagine 135 together coordinate S-adenosyl-L-methionine.

It belongs to the class I-like SAM-binding methyltransferase superfamily. rRNA adenine N(6)-methyltransferase family. RsmA subfamily.

It is found in the cytoplasm. The catalysed reaction is adenosine(1518)/adenosine(1519) in 16S rRNA + 4 S-adenosyl-L-methionine = N(6)-dimethyladenosine(1518)/N(6)-dimethyladenosine(1519) in 16S rRNA + 4 S-adenosyl-L-homocysteine + 4 H(+). Its function is as follows. Specifically dimethylates two adjacent adenosines (A1518 and A1519) in the loop of a conserved hairpin near the 3'-end of 16S rRNA in the 30S particle. May play a critical role in biogenesis of 30S subunits. The sequence is that of Ribosomal RNA small subunit methyltransferase A from Salinibacter ruber (strain DSM 13855 / M31).